Consider the following 669-residue polypeptide: Exostosin-like 1 (669 aa).

The Cytoplasmic segment spans residues 1–8; sequence MLWRRKSF. The chain crosses the membrane as a helical; Signal-anchor for type II membrane protein span at residues 9-29; it reads WLALSAFWLLLVLLGVFPLRL. The Lumenal segment spans residues 30 to 669; that stretch reads AVLPGPLPGR…RKKYRSLEKP (640 aa). Residues asparagine 263 and asparagine 480 are each glycosylated (N-linked (GlcNAc...) asparagine). Residues cysteine 577 and cysteine 627 are joined by a disulfide bond. Residues 601–621 form a disordered region; the sequence is RQHPEAVPMDSGDPRPVPEPQ.

This sequence belongs to the glycosyltransferase 47 family.

The protein localises to the endoplasmic reticulum membrane. The enzyme catalyses 3-O-{[(1-&gt;4)-beta-D-GlcA-(1-&gt;4)-alpha-D-GlcNAc](n)-(1-&gt;4)-beta-D-GlcA-(1-&gt;3)-beta-D-Gal-(1-&gt;3)-beta-D-Gal-(1-&gt;4)-beta-D-Xyl}-L-seryl-[protein] + UDP-N-acetyl-alpha-D-glucosamine = 3-O-{alpha-D-GlcNAc-[(1-&gt;4)-beta-D-GlcA-(1-&gt;4)-alpha-D-GlcNAc](n)-(1-&gt;4)-beta-D-GlcA-(1-&gt;3)-beta-D-Gal-(1-&gt;3)-beta-D-Gal-(1-&gt;4)-beta-D-Xyl}-L-seryl-[protein] + UDP + H(+). Its pathway is protein modification; protein glycosylation. In terms of biological role, glycosyltransferase required for the biosynthesis of heparan-sulfate (HS). Transfers N-acetyl-alpha-D-glucosamine to the nascent HS chain (GlcNAcT-II activity). Appears to lack GlcNAcT I and GlcAT-II activities. This Mus musculus (Mouse) protein is Exostosin-like 1 (Extl1).